Reading from the N-terminus, the 502-residue chain is Bone morphogenetic protein receptor type-1B (502 aa).

Residues 1–13 (MLLRSSGKLNVGT) form the signal peptide. The tract at residues 1–24 (MLLRSSGKLNVGTKKEDGESTAPT) is disordered. Residues 14 to 126 (KKEDGESTAP…DFVDGPIHHK (113 aa)) lie on the Extracellular side of the membrane. 5 disulfides stabilise this stretch: cysteine 32–cysteine 53, cysteine 34–cysteine 38, cysteine 47–cysteine 71, cysteine 81–cysteine 95, and cysteine 96–cysteine 102. Residues 127–148 (ALLISVTVCSLLLVLIILFCYF) traverse the membrane as a helical segment. The Cytoplasmic segment spans residues 149–502 (RYKRQEARPR…KMSESQDIKL (354 aa)). Residues 174 to 203 (ESLRDLIEQSQSSGSGSGLPLLVQRTIAKQ) enclose the GS domain. In terms of domain architecture, Protein kinase spans 204–494 (IQMVKQIGKG…LRVKKTLAKM (291 aa)). Residues 210–218 (IGKGRYGEV) and lysine 231 each bind ATP. Aspartate 332 acts as the Proton acceptor in catalysis.

The protein belongs to the protein kinase superfamily. TKL Ser/Thr protein kinase family. TGFB receptor subfamily. In terms of assembly, interacts with high affinity with GDF5; positively regulates chondrocyte differentiation. Interacts with SCUBE3. Interacts with TSC22D1/TSC-22. Interacts with TGFBR3. Mg(2+) is required as a cofactor. Requires Mn(2+) as cofactor. Post-translationally, autophosphorylated.

Its subcellular location is the cell membrane. The catalysed reaction is L-threonyl-[receptor-protein] + ATP = O-phospho-L-threonyl-[receptor-protein] + ADP + H(+). It carries out the reaction L-seryl-[receptor-protein] + ATP = O-phospho-L-seryl-[receptor-protein] + ADP + H(+). Its function is as follows. On ligand binding, forms a receptor complex consisting of two type II and two type I transmembrane serine/threonine kinases. Type II receptors phosphorylate and activate type I receptors which autophosphorylate, then bind and activate SMAD transcriptional regulators. Receptor for BMP7/OP-1. Receptor for GDF5. Positively regulates chondrocyte differentiation through GDF5 interaction. The protein is Bone morphogenetic protein receptor type-1B (Bmpr1b) of Mus musculus (Mouse).